We begin with the raw amino-acid sequence, 684 residues long: UvrABC system protein B (684 aa).

The 159-residue stretch at glutamate 30–arginine 188 folds into the Helicase ATP-binding domain. Glycine 43–threonine 50 serves as a coordination point for ATP. The Beta-hairpin motif lies at tyrosine 96–isoleucine 119. Positions glutamine 435 to leucine 601 constitute a Helicase C-terminal domain. Residues tyrosine 641–arginine 676 enclose the UVR domain.

This sequence belongs to the UvrB family. Forms a heterotetramer with UvrA during the search for lesions. Interacts with UvrC in an incision complex.

It is found in the cytoplasm. In terms of biological role, the UvrABC repair system catalyzes the recognition and processing of DNA lesions. A damage recognition complex composed of 2 UvrA and 2 UvrB subunits scans DNA for abnormalities. Upon binding of the UvrA(2)B(2) complex to a putative damaged site, the DNA wraps around one UvrB monomer. DNA wrap is dependent on ATP binding by UvrB and probably causes local melting of the DNA helix, facilitating insertion of UvrB beta-hairpin between the DNA strands. Then UvrB probes one DNA strand for the presence of a lesion. If a lesion is found the UvrA subunits dissociate and the UvrB-DNA preincision complex is formed. This complex is subsequently bound by UvrC and the second UvrB is released. If no lesion is found, the DNA wraps around the other UvrB subunit that will check the other stand for damage. This is UvrABC system protein B from Chlorobium limicola (strain DSM 245 / NBRC 103803 / 6330).